A 395-amino-acid chain; its full sequence is LL-diaminopimelate aminotransferase (395 aa).

Residues Tyr-14 and Gly-41 each contribute to the substrate site. Residues Tyr-71, 104 to 105 (AK), Tyr-128, Asn-174, Tyr-205, and 233 to 235 (SFS) each bind pyridoxal 5'-phosphate. Residues Lys-105, Tyr-128, and Asn-174 each coordinate substrate. Lys-236 is modified (N6-(pyridoxal phosphate)lysine). 2 residues coordinate pyridoxal 5'-phosphate: Arg-244 and Asn-275. Substrate is bound by residues Asn-275 and Arg-368.

The protein belongs to the class-I pyridoxal-phosphate-dependent aminotransferase family. LL-diaminopimelate aminotransferase subfamily. In terms of assembly, homodimer. Pyridoxal 5'-phosphate is required as a cofactor.

The enzyme catalyses (2S,6S)-2,6-diaminopimelate + 2-oxoglutarate = (S)-2,3,4,5-tetrahydrodipicolinate + L-glutamate + H2O + H(+). It functions in the pathway amino-acid biosynthesis; L-lysine biosynthesis via DAP pathway; LL-2,6-diaminopimelate from (S)-tetrahydrodipicolinate (aminotransferase route): step 1/1. Its function is as follows. Involved in the synthesis of meso-diaminopimelate (m-DAP or DL-DAP), required for both lysine and peptidoglycan biosynthesis. Catalyzes the direct conversion of tetrahydrodipicolinate to LL-diaminopimelate. This Chlamydia caviae (strain ATCC VR-813 / DSM 19441 / 03DC25 / GPIC) (Chlamydophila caviae) protein is LL-diaminopimelate aminotransferase.